An 89-amino-acid polypeptide reads, in one-letter code: U-scoloptoxin(12)-Er1a (89 aa).

The first 22 residues, 1–22, serve as a signal peptide directing secretion; it reads MKGLFLVVFLMWFVSQMNTEET.

It belongs to the scoloptoxin-12 family. Contains 3 disulfide bonds. As to expression, expressed by the venom gland.

The protein localises to the secreted. This is U-scoloptoxin(12)-Er1a from Ethmostigmus rubripes (Giant centipede).